Consider the following 212-residue polypeptide: MAIGLIGRKVGMTRIFTEDGASIPVTVIEIAANRVAQVKTLETDGYRALQITTGTKKANRITKPEAGHFAKAGVEAGRGLWEMRLADGEGEGIEVGAELNVDIFADVAKVDVTGQSKGKGFQGGIKRWNFRTQDATHGNSLAHRANGSIGQNQTPGRVFKGKKMSGHMGAERVTTQNLDVVRVDAERNLLLVKGAVPGATNGDLIIKPAVKA.

Q153 is subject to N5-methylglutamine.

It belongs to the universal ribosomal protein uL3 family. As to quaternary structure, part of the 50S ribosomal subunit. Forms a cluster with proteins L14 and L19. Post-translationally, methylated by PrmB.

One of the primary rRNA binding proteins, it binds directly near the 3'-end of the 23S rRNA, where it nucleates assembly of the 50S subunit. The sequence is that of Large ribosomal subunit protein uL3 from Shewanella loihica (strain ATCC BAA-1088 / PV-4).